The primary structure comprises 950 residues: 5'-3' exoribonuclease 2 (950 aa).

A CCHC-type zinc finger spans residues 262 to 278 (PCGLCNQFGHEVKDCEG). Lys286 is subject to N6-acetyllysine. The disordered stretch occupies residues 408 to 508 (KDDEDSFRRR…SDSEPEPEDN (101 aa)). A compositionally biased stretch (basic residues) spans 416–426 (RRQKEKRKRMK). A Phosphothreonine modification is found at Thr439. Residues 445 to 458 (SRNSPGSQVASNPR) show a composition bias toward polar residues. 9 positions are modified to phosphoserine: Ser448, Ser471, Ser473, Ser475, Ser482, Ser487, Ser499, Ser501, and Ser678. A compositionally biased stretch (low complexity) spans 468–482 (NNSSPSISPNTSFTS). An asymmetric dimethylarginine; alternate mark is found at Arg824, Arg847, and Arg851. Residues Arg824, Arg847, and Arg851 each carry the omega-N-methylarginine; alternate modification. Asymmetric dimethylarginine is present on Arg880. Position 883 is an asymmetric dimethylarginine; alternate (Arg883). Omega-N-methylarginine; alternate is present on Arg883. Arg895 carries the omega-N-methylarginine modification. The segment at 911 to 950 (MLAGPGGYPPRRDDRGGRQGYPREGRKYPLPPPSGRYNWN) is disordered. Over residues 920–937 (PRRDDRGGRQGYPREGRK) the composition is skewed to basic and acidic residues. Position 946 is an asymmetric dimethylarginine; alternate (Arg946). At Arg946 the chain carries Omega-N-methylarginine; alternate.

This sequence belongs to the 5'-3' exonuclease family. XRN2/RAT1 subfamily. As to quaternary structure, interacts with POLR2A and SMN1/SMN2. Interacts with CDKN2AIP and NKRF. Interacts with CDKN2AIPNL; the interaction is direct. Interacts with TRIM71 (via NHL repeats) in an RNA-dependent manner. Interacts with DHX34; the interaction is RNA-independent. As to expression, expressed in the spleen, thymus, prostate, testis, ovary, small intestine, colon, peripheral blood leukocytes, heart, brain, placenta, lung, liver, skeletal muscle, kidney, and pancreas. Isoform 2 is expressed predominantly in peripheral blood leukocytes.

Its subcellular location is the nucleus. It localises to the nucleolus. Possesses 5'-&gt;3' exoribonuclease activity. May promote the termination of transcription by RNA polymerase II. During transcription termination, cleavage at the polyadenylation site liberates a 5' fragment which is subsequently processed to form the mature mRNA and a 3' fragment which remains attached to the elongating polymerase. The processive degradation of this 3' fragment by this protein may promote termination of transcription. Binds to RNA polymerase II (RNAp II) transcription termination R-loops formed by G-rich pause sites. In Homo sapiens (Human), this protein is 5'-3' exoribonuclease 2 (XRN2).